Here is a 97-residue protein sequence, read N- to C-terminus: Cobalt transport protein CbiN (97 aa).

2 consecutive transmembrane segments (helical) span residues 6–26 (VLMI…YSGL) and 68–88 (SLLF…FFGY).

It belongs to the CbiN family. Forms an energy-coupling factor (ECF) transporter complex composed of an ATP-binding protein (A component, CbiO), a transmembrane protein (T component, CbiQ) and 2 possible substrate-capture proteins (S components, CbiM and CbiN) of unknown stoichimetry.

The protein localises to the cell membrane. It functions in the pathway cofactor biosynthesis; adenosylcobalamin biosynthesis. Its function is as follows. Part of the energy-coupling factor (ECF) transporter complex CbiMNOQ involved in cobalt import. The sequence is that of Cobalt transport protein CbiN from Methanococcus maripaludis (strain C6 / ATCC BAA-1332).